A 1276-amino-acid chain; its full sequence is Component of gems protein 5 (1276 aa).

The tract at residues 53 to 55 (NWY) is interaction with U4 snRNA. 8 WD repeats span residues 92 to 139 (GHTD…DDHN), 183 to 223 (EHKA…VFPI), 228 to 268 (GNNI…TVCK), 271 to 336 (AHSA…IESG), 364 to 405 (NDKQ…SPPE), 438 to 481 (TTKN…IKIQ), 485 to 522 (GFVY…KDAY), and 530 to 574 (GIQS…SKIF). Residues 138 to 157 (HNEDTEIGDDFKHGSGGGGS) form a disordered region. Residues 586–652 (IWKPPPTPTP…NSNNEQQPNK (67 aa)) are disordered. A compositionally biased stretch (low complexity) spans 598–646 (NINNNNNNNNNNNNNNNNNNNNNNNNNNNNNNNNNNNNINNNNNNNSNN). 2 WD repeats span residues 688–727 (TFSK…LTRI) and 729–771 (EHKK…NQNE). Over residues 772-793 (NEKKIDNEKGKENENEKGKENE) the composition is skewed to basic and acidic residues. The disordered stretch occupies residues 772–809 (NEKKIDNEKGKENENEKGKENENENENENENENENENE). A coiled-coil region spans residues 778–829 (NEKGKENENEKGKENENENENENENENENENENEIENIVNNNNENDTEIEIK). Over residues 794-809 (NENENENENENENENE) the composition is skewed to acidic residues. 2 WD repeats span residues 863–903 (GHKN…AISN) and 906–946 (GHDG…FKTV). The disordered stretch occupies residues 967 to 997 (ITEQQQQQQQPQSPIKSNPDQSNNPSLVPPI). The span at 979–992 (SPIKSNPDQSNNPS) shows a compositional bias: polar residues.

This sequence belongs to the WD repeat gemin-5 family. Part of the core SMN complex.

It localises to the nucleus. The protein localises to the nucleoplasm. The protein resides in the gem. It is found in the cytoplasm. In terms of biological role, the SMN complex catalyzes the assembly of small nuclear ribonucleoproteins (snRNPs), the building blocks of the spliceosome, and thereby plays an important role in the splicing of cellular pre-mRNAs. Most spliceosomal snRNPs contain a common set of Sm proteins SNRPB, SNRPD1, SNRPD2, SNRPD3, SNRPE, SNRPF and SNRPG that assemble in a heptameric protein ring on the Sm site of the small nuclear RNA to form the core snRNP (Sm core). In the cytosol, the Sm proteins SNRPD1, SNRPD2, SNRPE, SNRPF and SNRPG are trapped in an inactive 6S pICln-Sm complex by the chaperone CLNS1A that controls the assembly of the core snRNP. To assemble core snRNPs, the SMN complex accepts the trapped 5Sm proteins from CLNS1A forming an intermediate. Binding of snRNA inside 5Sm ultimately triggers eviction of the SMN complex, thereby allowing binding of SNRPD3 and SNRPB to complete assembly of the core snRNP. Within the SMN complex, GEMIN5 recognizes and delivers the small nuclear RNAs (snRNAs) to the SMN complex. Binds to the 7-methylguanosine cap of RNA molecules. The polypeptide is Component of gems protein 5 (gemin5) (Dictyostelium discoideum (Social amoeba)).